The primary structure comprises 591 residues: Aspartate--tRNA ligase (591 aa).

Glu-171 is an L-aspartate binding site. The interval 195 to 198 (QLFK) is aspartate. Arg-217 serves as a coordination point for L-aspartate. ATP-binding positions include 217 to 219 (RDE) and Gln-226. His-448 lines the L-aspartate pocket. Glu-482 lines the ATP pocket. L-aspartate is bound at residue Arg-489. 534–537 (GLDR) is an ATP binding site.

It belongs to the class-II aminoacyl-tRNA synthetase family. Type 1 subfamily. Homodimer.

It is found in the cytoplasm. It catalyses the reaction tRNA(Asp) + L-aspartate + ATP = L-aspartyl-tRNA(Asp) + AMP + diphosphate. Catalyzes the attachment of L-aspartate to tRNA(Asp) in a two-step reaction: L-aspartate is first activated by ATP to form Asp-AMP and then transferred to the acceptor end of tRNA(Asp). In Edwardsiella ictaluri (strain 93-146), this protein is Aspartate--tRNA ligase.